The chain runs to 173 residues: Nicotinamide-nucleotide adenylyltransferase (173 aa).

It belongs to the archaeal NMN adenylyltransferase family.

The protein localises to the cytoplasm. The catalysed reaction is beta-nicotinamide D-ribonucleotide + ATP + H(+) = diphosphate + NAD(+). The protein operates within cofactor biosynthesis; NAD(+) biosynthesis; NAD(+) from nicotinamide D-ribonucleotide: step 1/1. This is Nicotinamide-nucleotide adenylyltransferase from Methanosarcina mazei (strain ATCC BAA-159 / DSM 3647 / Goe1 / Go1 / JCM 11833 / OCM 88) (Methanosarcina frisia).